Here is a 167-residue protein sequence, read N- to C-terminus: Caffeine dehydrogenase subunit gamma (167 aa).

Positions 4-80 constitute a 2Fe-2S ferredoxin-type domain; the sequence is HVISLTVNGQ…GHSIRTVEAL (77 aa). The [2Fe-2S] cluster site is built by C42, C47, C50, and C62.

In terms of assembly, heterotrimer composed of an alpha (CdhA), a beta (CdhB) and a gamma (CdhC) subunit.

It carries out the reaction caffeine + a ubiquinone + H2O = 1,3,7-trimethylurate + a ubiquinol. The catalysed reaction is ubiquinone-0 + caffeine + H2O = ubiquinol-0 + 1,3,7-trimethylurate. The enzyme catalyses theobromine + a ubiquinone + H2O = 3,7-dimethylurate + a ubiquinol. Functionally, component of the caffeine dehydrogenase complex that catalyzes the hydrolytical oxidation of 1,3,7-trimethylxanthine (caffeine) by incorporation of an oxygen atom originating from a water molecule into position C-8 to produce 1,3,7-trimethyluric acid (TMU). Coenzyme Q0 (ubiquinone-0) is the preferred electron acceptor and, to a lesser extent, coenzyme Q2 (ubiquinone-2) can also be used, but oxygen and NAD(P)(+) cannot. Is involved in a caffeine degradation pathway that allows Pseudomonas sp. strain CBB1 to grow on caffeine as the sole carbon and nitrogen source. Is also active with theobromine as substrate, but shows a very poor activity with theophylline and is not active with xanthine, 3-methylxanthine, 7-methylxanthine, TMU, and 3,7-dimethylurate. This chain is Caffeine dehydrogenase subunit gamma, found in Pseudomonas sp. (strain CBB1).